A 107-amino-acid polypeptide reads, in one-letter code: Polyketide synthase CurG (107 aa).

The protein operates within antibiotic biosynthesis; curamycin biosynthesis. The polypeptide is Polyketide synthase CurG (curG) (Streptomyces cyaneus (Streptomyces curacoi)).